We begin with the raw amino-acid sequence, 139 residues long: Inactive palmitoleoyl-protein carboxylesterase notum1b (139 aa).

It belongs to the pectinacetylesterase family. Notum subfamily.

In terms of biological role, probable inactive palmitoleoyl-protein carboxylesterase. In Danio rerio (Zebrafish), this protein is Inactive palmitoleoyl-protein carboxylesterase notum1b.